The chain runs to 28 residues: Ranatuerin-2BYb (28 aa).

The cysteines at positions 23 and 28 are disulfide-linked.

In terms of tissue distribution, expressed by the skin glands.

The protein localises to the secreted. Its function is as follows. Antibacterial activity against Gram-negative bacterium E.coli. Very weak hemolysis activity. The polypeptide is Ranatuerin-2BYb (Rana boylii (Foothill yellow-legged frog)).